The primary structure comprises 465 residues: 2-halobenzoate 1,2-dioxygenase large subunit (465 aa).

Residues 56 to 154 (WVFLAHESQV…GFNVDGSHDL (99 aa)) form the Rieske domain. The [2Fe-2S] cluster site is built by cysteine 98, histidine 100, cysteine 118, and histidine 121. The Fe cation site is built by histidine 227 and histidine 232.

It belongs to the bacterial ring-hydroxylating dioxygenase alpha subunit family. In terms of assembly, heterohexamer of 3 large (CbdA) subunits and 3 small (CbdB) subunits. The heterohexamer is part of 2-halobenzoate dioxygenase two component enzyme system. The other component is a NADH:acceptor reductase (CdbC). It depends on [2Fe-2S] cluster as a cofactor. Requires Fe(2+) as cofactor.

It carries out the reaction a 2-halobenzoate + NADH + O2 + H(+) = a halide anion + catechol + CO2 + NAD(+). It functions in the pathway xenobiotic degradation; benzoate degradation via CoA ligation. Functionally, component of 2-halobenzoate dioxygenase multicomponent enzyme system which catalyzes the incorporation of both atoms of molecular oxygen into 2-halobenzoate to form catechol. This Burkholderia cepacia (Pseudomonas cepacia) protein is 2-halobenzoate 1,2-dioxygenase large subunit (cbdA).